A 116-amino-acid chain; its full sequence is Large ribosomal subunit protein bL17 (116 aa).

Belongs to the bacterial ribosomal protein bL17 family. Part of the 50S ribosomal subunit. Contacts protein L32.

This chain is Large ribosomal subunit protein bL17, found in Chloroflexus aurantiacus (strain ATCC 29366 / DSM 635 / J-10-fl).